Reading from the N-terminus, the 151-residue chain is UPF0102 protein Ava_4800 (151 aa).

Belongs to the UPF0102 family.

The chain is UPF0102 protein Ava_4800 from Trichormus variabilis (strain ATCC 29413 / PCC 7937) (Anabaena variabilis).